The primary structure comprises 310 residues: CCR4-NOT transcription complex subunit 7 (310 aa).

The a divalent metal cation site is built by Asp-51, Glu-53, Asp-172, and Asp-245.

This sequence belongs to the CAF1 family. As to quaternary structure, component of the CCR4-NOT complex at least composed of ccf-1, ccr-4 and let-711, which is required for germ cell development in hermaphrodites. Within the complex interacts with let-711. As to expression, highly expressed in the germline. In particular, highly expressed in germ cells that enter meiosis and progress through the pachytene stage.

It localises to the nucleus. The protein resides in the cytoplasm. The enzyme catalyses Exonucleolytic cleavage of poly(A) to 5'-AMP.. Its function is as follows. Catalytic component of the CCR4-NOT complex which is one of the major cellular mRNA deadenylases and is linked to various cellular processes including bulk mRNA degradation, miRNA-mediated repression, translational repression during translational initiation and general transcription regulation. Within the complex, plays a role in miRNA-mediated deadenylation in embryos. Within the complex promotes germ cell development and fertility in hermaphrodites. Additional complex functions may be a consequence of its influence on mRNA expression. The protein is CCR4-NOT transcription complex subunit 7 of Caenorhabditis elegans.